A 483-amino-acid chain; its full sequence is FAD-linked oxidoreductase easE (483 aa).

The FAD-binding PCMH-type domain maps to 10-193; that stretch reads QGRLPLYSAV…TEATVRVFSD (184 aa).

Belongs to the oxygen-dependent FAD-linked oxidoreductase family. It depends on FAD as a cofactor.

Its pathway is alkaloid biosynthesis; ergot alkaloid biosynthesis. In terms of biological role, FAD-linked oxidoreductase; part of the gene cluster that mediates the biosynthesis of fungal ergot alkaloid. DmaW catalyzes the first step of ergot alkaloid biosynthesis by condensing dimethylallyl diphosphate (DMAP) and tryptophan to form 4-dimethylallyl-L-tryptophan. The second step is catalyzed by the methyltransferase easF that methylates 4-dimethylallyl-L-tryptophan in the presence of S-adenosyl-L-methionine, resulting in the formation of 4-dimethylallyl-L-abrine. The catalase easC and the FAD-dependent oxidoreductase easE then transform 4-dimethylallyl-L-abrine to chanoclavine-I which is further oxidized by easD in the presence of NAD(+), resulting in the formation of chanoclavine-I aldehyde. Agroclavine dehydrogenase easG then mediates the conversion of chanoclavine-I aldehyde to agroclavine via a non-enzymatic adduct reaction: the substrate is an iminium intermediate that is formed spontaneously from chanoclavine-I aldehyde in the presence of glutathione. The presence of easA is not required to complete this reaction. Further conversion of agroclavine to paspalic acid is a two-step process involving oxidation of agroclavine to elymoclavine and of elymoclavine to paspalic acid, the second step being performed by the elymoclavine oxidase cloA. Paspalic acid is then further converted to D-lysergic acid. Ergopeptines are assembled from D-lysergic acid and three different amino acids by the D-lysergyl-peptide-synthetases composed each of a monomudular and a trimodular nonribosomal peptide synthetase subunit. LpsB and lpsC encode the monomodular subunits responsible for D-lysergic acid activation and incorporation into the ergopeptine backbone. LpsA1 and A2 subunits encode the trimodular nonribosomal peptide synthetase assembling the tripeptide portion of ergopeptines. LpsA1 is responsible for formation of the major ergopeptine, ergotamine, and lpsA2 for alpha-ergocryptine, the minor ergopeptine of the total alkaloid mixture elaborated by C.purpurea. D-lysergyl-tripeptides are assembled by the nonribosomal peptide synthetases and released as N-(D-lysergyl-aminoacyl)-lactams. Cyclolization of the D-lysergyl-tripeptides is performed by the Fe(2+)/2-ketoglutarate-dependent dioxygenase easH which introduces a hydroxyl group into N-(D-lysergyl-aminoacyl)-lactam at alpha-C of the aminoacyl residue followed by spontaneous condensation with the terminal lactam carbonyl group. This chain is FAD-linked oxidoreductase easE, found in Claviceps purpurea (Ergot fungus).